A 557-amino-acid chain; its full sequence is Eudesmanediol synthase (557 aa).

The Mg(2+) site is built by aspartate 310 and aspartate 314. Residues aspartate 310, aspartate 314, and arginine 450 each contribute to the substrate site. Residues 310–314 carry the DDXXD motif motif; it reads DDTFD. Mg(2+) contacts are provided by asparagine 453 and serine 457.

This sequence belongs to the terpene synthase family. Monomer. Mg(2+) is required as a cofactor. The cofactor is Mn(2+).

Its subcellular location is the cytoplasm. The catalysed reaction is (2E,6E)-farnesyl diphosphate + 2 H2O = 7-epi-ent-eudesmane-5,11-diol + diphosphate. The protein operates within secondary metabolite biosynthesis; terpenoid biosynthesis. Functionally, component of the volatile terpenes biosynthesis pathways. Dihydroxylated sesquiterpenoid synthase that generates dually hydroxylated products directly from (E,E)-farnesyl diphosphate, primarily eudesmane-2,11-diol, along with two closely related structural isomers. The chain is Eudesmanediol synthase from Zea mays (Maize).